The chain runs to 902 residues: AAA+ ATPase ClpV1 (902 aa).

A Clp R domain is found at Phe-10–Asp-151. Repeat regions lie at residues Leu-13–Leu-78 and Leu-88–Asp-151. Residue Gly-237–Thr-244 participates in ATP binding. A coiled-coil region spans residues Ala-441–Glu-559. ATP is bound at residue Gly-640 to Thr-647.

This sequence belongs to the ClpA/ClpB family. As to quaternary structure, interacts with TagJ.

It localises to the cytoplasm. In terms of biological role, component of the H1 type VI (H1-T6SS) secretion system that plays a role in the release of toxins targeting both eukaryotic and prokaryotic species. Acts as an AAA(+) ATPase that disassembles the contracted sheath, which resets the systems for reassembly of an extended sheath that is ready to fire again. In Pseudomonas aeruginosa (strain ATCC 15692 / DSM 22644 / CIP 104116 / JCM 14847 / LMG 12228 / 1C / PRS 101 / PAO1), this protein is AAA+ ATPase ClpV1 (clpV1).